A 755-amino-acid chain; its full sequence is Anaphase-promoting complex subunit 5 (755 aa).

A Phosphoserine modification is found at Ser195. TPR repeat units follow at residues Gln209 to Asp249, Phe250 to Leu300, Arg301 to His337, Val338 to Ser378, Leu379 to Ile418, Asp419 to Phe466, Ala467 to Asn500, Ser501 to Ser540, Ile541 to Val580, Ile581 to Ala620, Ser621 to Lys660, Gly661 to Glu696, and Ala697 to Leu736. A Phosphothreonine modification is found at Thr232.

This sequence belongs to the APC5 family. As to quaternary structure, the mammalian APC/C is composed at least of 14 distinct subunits ANAPC1, ANAPC2, CDC27/APC3, ANAPC4, ANAPC5, CDC16/APC6, ANAPC7, CDC23/APC8, ANAPC10, ANAPC11, CDC26/APC12, ANAPC13, ANAPC15 and ANAPC16 that assemble into a complex of at least 19 chains with a combined molecular mass of around 1.2 MDa; APC/C interacts with FZR1 and FBXO5.

The protein resides in the nucleus. The protein localises to the cytoplasm. Its subcellular location is the cytoskeleton. It localises to the spindle. The protein operates within protein modification; protein ubiquitination. In terms of biological role, component of the anaphase promoting complex/cyclosome (APC/C), a cell cycle-regulated E3 ubiquitin ligase that controls progression through mitosis and the G1 phase of the cell cycle. The APC/C complex acts by mediating ubiquitination and subsequent degradation of target proteins: it mainly mediates the formation of 'Lys-11'-linked polyubiquitin chains and, to a lower extent, the formation of 'Lys-48'- and 'Lys-63'-linked polyubiquitin chains. The APC/C complex catalyzes assembly of branched 'Lys-11'-/'Lys-48'-linked branched ubiquitin chains on target proteins. In Homo sapiens (Human), this protein is Anaphase-promoting complex subunit 5 (ANAPC5).